The chain runs to 254 residues: uncharacterized protein (254 aa).

This is an uncharacterized protein from Acidianus filamentous virus 2 (isolate Italy/Pozzuoli) (AFV-2).